The chain runs to 284 residues: Diaminopimelate epimerase (284 aa).

Residues N20, Q53, and N73 each coordinate substrate. C82 (proton donor) is an active-site residue. Substrate contacts are provided by residues 83 to 84, N167, N200, and 218 to 219; these read GN and ER. C227 acts as the Proton acceptor in catalysis. Residue 228-229 participates in substrate binding; the sequence is GS.

This sequence belongs to the diaminopimelate epimerase family. Homodimer.

It localises to the cytoplasm. It carries out the reaction (2S,6S)-2,6-diaminopimelate = meso-2,6-diaminopimelate. The protein operates within amino-acid biosynthesis; L-lysine biosynthesis via DAP pathway; DL-2,6-diaminopimelate from LL-2,6-diaminopimelate: step 1/1. Catalyzes the stereoinversion of LL-2,6-diaminopimelate (L,L-DAP) to meso-diaminopimelate (meso-DAP), a precursor of L-lysine and an essential component of the bacterial peptidoglycan. This is Diaminopimelate epimerase from Xanthomonas campestris pv. campestris (strain ATCC 33913 / DSM 3586 / NCPPB 528 / LMG 568 / P 25).